Here is a 122-residue protein sequence, read N- to C-terminus: Acidic phospholipase A2 Tpu-E6b (122 aa).

Intrachain disulfides connect Cys26–Cys115, Cys28–Cys44, Cys43–Cys95, Cys49–Cys122, Cys50–Cys88, Cys57–Cys81, and Cys75–Cys86. Ca(2+) contacts are provided by Tyr27, Gly29, and Gly31. The active site involves His47. Asp48 is a Ca(2+) binding site. Asp89 is an active-site residue.

Monomer. The cofactor is Ca(2+). Expressed by the venom gland.

The protein localises to the secreted. The catalysed reaction is a 1,2-diacyl-sn-glycero-3-phosphocholine + H2O = a 1-acyl-sn-glycero-3-phosphocholine + a fatty acid + H(+). Its function is as follows. Snake venom phospholipase A2 (PLA2) that weakly inhibits ADP-induced platelet aggregation when tested on platelet rich plasma from human and rabbit blood (15-25% of inhibition at 5-10 ug of enzyme). Exhibits moderate hydrolytic activities toward L-dipalmitoyl phosphatidylcholine. PLA2 catalyzes the calcium-dependent hydrolysis of the 2-acyl groups in 3-sn-phosphoglycerides. The chain is Acidic phospholipase A2 Tpu-E6b from Craspedocephalus puniceus (Flat-nosed pitviper).